We begin with the raw amino-acid sequence, 169 residues long: Protein UL138 (169 aa).

Residues 8–28 traverse the membrane as a helical segment; it reads VGLPIIGVMLVLIVAILCYLA. The tract at residues 109 to 133 is disordered; it reads DRRAGSSSSSSVHVANQRNSVPPPD.

Interacts with host TNFR1. Interacts with host MRP1. Interacts with host UAF1/WDR48. Interacts with host STING1.

The protein resides in the host Golgi apparatus membrane. Its function is as follows. Plays an important role in the establishment of latent viral infection. Modulates the expression of several host cell surface receptors such as TNFR1, CD36 or the MRP1 transporter during productive infection. For instance, associates with host MRP1 and induces its lysosomal degradation. Plays an inhibitory role in the host cGAS/STING/TBK1 pathway and upstream of IRF3 phosphorylation and NF-kappa-B leading to inhibition of interferon beta production during both lytic and latent infections. Also participates in the establishment of latency by sustaining an innate immune response through phosphorylation and activation of host STAT1. In Human cytomegalovirus (strain Merlin) (HHV-5), this protein is Protein UL138 (UL138).